We begin with the raw amino-acid sequence, 338 residues long: Ribosomal RNA small subunit methyltransferase C (338 aa).

Belongs to the methyltransferase superfamily. RsmC family. In terms of assembly, monomer.

Its subcellular location is the cytoplasm. It catalyses the reaction guanosine(1207) in 16S rRNA + S-adenosyl-L-methionine = N(2)-methylguanosine(1207) in 16S rRNA + S-adenosyl-L-homocysteine + H(+). In terms of biological role, specifically methylates the guanine in position 1207 of 16S rRNA in the 30S particle. The polypeptide is Ribosomal RNA small subunit methyltransferase C (Photorhabdus laumondii subsp. laumondii (strain DSM 15139 / CIP 105565 / TT01) (Photorhabdus luminescens subsp. laumondii)).